Here is a 573-residue protein sequence, read N- to C-terminus: Proline--tRNA ligase (573 aa).

The protein belongs to the class-II aminoacyl-tRNA synthetase family. ProS type 1 subfamily. Homodimer.

It is found in the cytoplasm. The enzyme catalyses tRNA(Pro) + L-proline + ATP = L-prolyl-tRNA(Pro) + AMP + diphosphate. Functionally, catalyzes the attachment of proline to tRNA(Pro) in a two-step reaction: proline is first activated by ATP to form Pro-AMP and then transferred to the acceptor end of tRNA(Pro). As ProRS can inadvertently accommodate and process non-cognate amino acids such as alanine and cysteine, to avoid such errors it has two additional distinct editing activities against alanine. One activity is designated as 'pretransfer' editing and involves the tRNA(Pro)-independent hydrolysis of activated Ala-AMP. The other activity is designated 'posttransfer' editing and involves deacylation of mischarged Ala-tRNA(Pro). The misacylated Cys-tRNA(Pro) is not edited by ProRS. The sequence is that of Proline--tRNA ligase from Cupriavidus taiwanensis (strain DSM 17343 / BCRC 17206 / CCUG 44338 / CIP 107171 / LMG 19424 / R1) (Ralstonia taiwanensis (strain LMG 19424)).